Reading from the N-terminus, the 233-residue chain is ATP-dependent Clp protease proteolytic subunit 2 (233 aa).

The active-site Nucleophile is Ser-116. Residue His-141 is part of the active site. A disordered region spans residues 214–233 (EGLKSIQPNGEAADDSEDDA).

The protein belongs to the peptidase S14 family. As to quaternary structure, fourteen ClpP subunits assemble into 2 heptameric rings which stack back to back to give a disk-like structure with a central cavity, resembling the structure of eukaryotic proteasomes.

The protein resides in the cytoplasm. The enzyme catalyses Hydrolysis of proteins to small peptides in the presence of ATP and magnesium. alpha-casein is the usual test substrate. In the absence of ATP, only oligopeptides shorter than five residues are hydrolyzed (such as succinyl-Leu-Tyr-|-NHMec, and Leu-Tyr-Leu-|-Tyr-Trp, in which cleavage of the -Tyr-|-Leu- and -Tyr-|-Trp bonds also occurs).. Its function is as follows. Cleaves peptides in various proteins in a process that requires ATP hydrolysis. Has a chymotrypsin-like activity. Plays a major role in the degradation of misfolded proteins. The protein is ATP-dependent Clp protease proteolytic subunit 2 of Salinibacter ruber (strain DSM 13855 / M31).